A 153-amino-acid polypeptide reads, in one-letter code: 6,7-dimethyl-8-ribityllumazine synthase (153 aa).

Residues Phe22, 56 to 58, and 80 to 82 contribute to the 5-amino-6-(D-ribitylamino)uracil site; these read AFE and TVI. Residue 85–86 participates in (2S)-2-hydroxy-3-oxobutyl phosphate binding; that stretch reads ST. His88 serves as the catalytic Proton donor. Phe113 is a binding site for 5-amino-6-(D-ribitylamino)uracil. Residue Arg127 coordinates (2S)-2-hydroxy-3-oxobutyl phosphate.

This sequence belongs to the DMRL synthase family. In terms of assembly, forms an icosahedral capsid composed of 60 subunits, arranged as a dodecamer of pentamers.

The catalysed reaction is (2S)-2-hydroxy-3-oxobutyl phosphate + 5-amino-6-(D-ribitylamino)uracil = 6,7-dimethyl-8-(1-D-ribityl)lumazine + phosphate + 2 H2O + H(+). It participates in cofactor biosynthesis; riboflavin biosynthesis; riboflavin from 2-hydroxy-3-oxobutyl phosphate and 5-amino-6-(D-ribitylamino)uracil: step 1/2. Catalyzes the formation of 6,7-dimethyl-8-ribityllumazine by condensation of 5-amino-6-(D-ribitylamino)uracil with 3,4-dihydroxy-2-butanone 4-phosphate. This is the penultimate step in the biosynthesis of riboflavin. The sequence is that of 6,7-dimethyl-8-ribityllumazine synthase from Glaesserella parasuis serovar 5 (strain SH0165) (Haemophilus parasuis).